The sequence spans 361 residues: Transcription factor TCP10 (361 aa).

Residues 29 to 87 enclose the TCP domain; the sequence is RKDRHSKVFTSKGPRDRRVRLSAHTAIQFYDVQDRLGYDRPSKAVDWLIKKAKTAIDKL. Disordered regions lie at residues 220 to 259 and 295 to 317; these read DLTM…QPSM and SWDH…SMFA. Residues 295–304 show a composition bias toward basic and acidic residues; sequence SWDHHQTTSD.

In terms of assembly, interacts with AHP1, AHP2 and AHP3. Interacts with SPL. In terms of tissue distribution, mostly detected in lateral organs, such as leaves and flowers. Expressed in cotyledons, particularly in the vascular region, in leaves, roots, stems, buds, flowers and immature siliques.

The protein resides in the nucleus. In terms of biological role, plays a pivotal role in the control of morphogenesis of shoot organs by negatively regulating the expression of boundary-specific genes such as CUC genes, probably through the induction of miRNA (e.g. miR164). Participates in ovule development. This Arabidopsis thaliana (Mouse-ear cress) protein is Transcription factor TCP10 (TCP10).